The chain runs to 141 residues: ATP synthase epsilon chain (141 aa).

Belongs to the ATPase epsilon chain family. As to quaternary structure, F-type ATPases have 2 components, CF(1) - the catalytic core - and CF(0) - the membrane proton channel. CF(1) has five subunits: alpha(3), beta(3), gamma(1), delta(1), epsilon(1). CF(0) has three main subunits: a, b and c.

It localises to the cell inner membrane. Its function is as follows. Produces ATP from ADP in the presence of a proton gradient across the membrane. The polypeptide is ATP synthase epsilon chain (Desulfatibacillum aliphaticivorans).